The chain runs to 157 residues: Protein UXT (157 aa).

This sequence belongs to the UXT family. In terms of assembly, homohexamer. Component of the PAQosome complex which is responsible for the biogenesis of several protein complexes and which consists of R2TP complex members RUVBL1, RUVBL2, RPAP3 and PIH1D1, URI complex members PFDN2, PFDN6, PDRG1, UXT and URI1 as well as ASDURF, POLR2E and DNAAF10/WDR92. Interacts with LRPPRC. Interacts with androgen receptor AR (via N-terminus). Interacts with estrogen receptor ESR1; the interaction relocalizes ESR1 to the cytoplasm. In the nucleus, interacts specifically with RELA (via RHD domain) and forms a dynamic complex with NF-kappa-B and is recruited to the NF-kappa-B enhanceosome upon stimulation. Interacts with MECOM. Interacts with URI1.

The protein resides in the cytoplasm. Its subcellular location is the nucleus. The protein localises to the cytoskeleton. It localises to the microtubule organizing center. It is found in the centrosome. The protein resides in the spindle pole. Involved in gene transcription regulation. Acts in concert with the corepressor URI1 to regulate androgen receptor AR-mediated transcription. Together with URI1, associates with chromatin to the NKX3-1 promoter region. Negatively regulates the transcriptional activity of the estrogen receptor ESR1 by inducing its translocation into the cytoplasm. May act as nuclear chaperone that facilitates the formation of the NF-kappa-B enhanceosome and thus positively regulates NF-kappa-B transcription activity. Potential component of mitochondrial-associated LRPPRC, a multidomain organizer that potentially integrates mitochondria and the microtubular cytoskeleton with chromosome remodeling. Increasing concentrations of UXT contributes to progressive aggregation of mitochondria and cell death potentially through its association with LRPPRC. Suppresses cell transformation and it might mediate this function by interaction and inhibition of the biological activity of cell proliferation and survival stimulatory factors like MECOM. The protein is Protein UXT (Uxt) of Rattus norvegicus (Rat).